A 288-amino-acid polypeptide reads, in one-letter code: 4-hydroxy-tetrahydrodipicolinate synthase (288 aa).

A pyruvate-binding site is contributed by threonine 42. Tyrosine 129 functions as the Proton donor/acceptor in the catalytic mechanism. Lysine 158 functions as the Schiff-base intermediate with substrate in the catalytic mechanism. Position 200 (isoleucine 200) interacts with pyruvate.

This sequence belongs to the DapA family. In terms of assembly, homotetramer; dimer of dimers.

It localises to the cytoplasm. It catalyses the reaction L-aspartate 4-semialdehyde + pyruvate = (2S,4S)-4-hydroxy-2,3,4,5-tetrahydrodipicolinate + H2O + H(+). It functions in the pathway amino-acid biosynthesis; L-lysine biosynthesis via DAP pathway; (S)-tetrahydrodipicolinate from L-aspartate: step 3/4. In terms of biological role, catalyzes the condensation of (S)-aspartate-beta-semialdehyde [(S)-ASA] and pyruvate to 4-hydroxy-tetrahydrodipicolinate (HTPA). The sequence is that of 4-hydroxy-tetrahydrodipicolinate synthase from Thermosipho melanesiensis (strain DSM 12029 / CIP 104789 / BI429).